Reading from the N-terminus, the 69-residue chain is Putative membrane protein insertion efficiency factor (69 aa).

Belongs to the UPF0161 family.

The protein resides in the cell inner membrane. Functionally, could be involved in insertion of integral membrane proteins into the membrane. In Laribacter hongkongensis (strain HLHK9), this protein is Putative membrane protein insertion efficiency factor.